The following is a 350-amino-acid chain: Phospho-2-dehydro-3-deoxyheptonate aldolase, Phe-sensitive (350 aa).

The residue at position 244 (Lys244) is an N6-acetyllysine.

This sequence belongs to the class-I DAHP synthase family. In terms of assembly, homotetramer.

It carries out the reaction D-erythrose 4-phosphate + phosphoenolpyruvate + H2O = 7-phospho-2-dehydro-3-deoxy-D-arabino-heptonate + phosphate. It functions in the pathway metabolic intermediate biosynthesis; chorismate biosynthesis; chorismate from D-erythrose 4-phosphate and phosphoenolpyruvate: step 1/7. In terms of biological role, stereospecific condensation of phosphoenolpyruvate (PEP) and D-erythrose-4-phosphate (E4P) giving rise to 3-deoxy-D-arabino-heptulosonate-7-phosphate (DAHP). In Escherichia coli O157:H7, this protein is Phospho-2-dehydro-3-deoxyheptonate aldolase, Phe-sensitive (aroG).